Here is a 389-residue protein sequence, read N- to C-terminus: 8-amino-7-oxononanoate synthase (389 aa).

Substrate is bound at residue Arg-19. 106–107 is a pyridoxal 5'-phosphate binding site; the sequence is GY. His-131 lines the substrate pocket. Pyridoxal 5'-phosphate-binding residues include Ser-176, His-204, and Thr-233. The residue at position 236 (Lys-236) is an N6-(pyridoxal phosphate)lysine. Thr-350 provides a ligand contact to substrate.

Belongs to the class-II pyridoxal-phosphate-dependent aminotransferase family. BioF subfamily. Homodimer. Pyridoxal 5'-phosphate is required as a cofactor.

It carries out the reaction 6-carboxyhexanoyl-[ACP] + L-alanine + H(+) = (8S)-8-amino-7-oxononanoate + holo-[ACP] + CO2. The protein operates within cofactor biosynthesis; biotin biosynthesis. Functionally, catalyzes the decarboxylative condensation of pimeloyl-[acyl-carrier protein] and L-alanine to produce 8-amino-7-oxononanoate (AON), [acyl-carrier protein], and carbon dioxide. The chain is 8-amino-7-oxononanoate synthase from Ectopseudomonas mendocina (strain ymp) (Pseudomonas mendocina).